Here is a 520-residue protein sequence, read N- to C-terminus: MPASELKASEIPFHPSIKTQDPKAEEKSPKKQKVTLTAAEALKLFKNQLSPYEQSEILGYAELWFLGLEAKKLDTAPEKFSKTSFDDEHGFYLKVLHDHIAYRYEVLETIGKGSFGQVAKCLDHKNNELVALKIIRNKKRFHQQALMELKILEALRKKDKDNTYNVVHMKDFFYFRNHFCITFELLGINLYELMKNNNFQGFSLSIVRRFTLSVLKCLQMLSVEKIIHCDLKPENIVLYQKGQASVKVIDFGSSCYEHQKVYTYIQSRFYRSPEVILGHPYDVAIDMWSLGCITAELYTGYPLFPGENEVEQLACIMEVLGLPPAGFIQTASRRQTFFDSKGFPKNITNNRGKKRYPDSKDLTMVLKTYDTSFLDFLRRCLVWEPSLRMTPDQALKHAWIHQSRNLKPQPRPQTLRKSNSFFPSETRKDKVQGCHHSSRKADEITKETTEKTKDSPTKHVQHSGDQQDCLQHGADTVQLPQLVDAPKKSEAAVGAEVSMTSPGQSKNFSLKNTNVLPPIV.

The disordered stretch occupies residues 1 to 32; the sequence is MPASELKASEIPFHPSIKTQDPKAEEKSPKKQ. The short motif at 19–37 is the Bipartite nuclear localization signal element; it reads TQDPKAEEKSPKKQKVTLT. Over residues 20–29 the composition is skewed to basic and acidic residues; the sequence is QDPKAEEKSP. The Protein kinase domain occupies 104–400; the sequence is YEVLETIGKG…PDQALKHAWI (297 aa). ATP-binding positions include 110-118, lysine 133, and 183-186; these read IGKGSFGQV and FELL. Catalysis depends on aspartate 230, which acts as the Proton acceptor. Tyrosine 264 carries the phosphotyrosine; by autocatalysis modification. The tract at residues 404–467 is disordered; that stretch reads RNLKPQPRPQ…KHVQHSGDQQ (64 aa). The segment covering 439-457 has biased composition (basic and acidic residues); it reads RKADEITKETTEKTKDSPT.

The protein belongs to the protein kinase superfamily. CMGC Ser/Thr protein kinase family. MNB/DYRK subfamily. Mg(2+) serves as cofactor. Autophosphorylation on Tyr-264 in the activation loop is required for kinase activity.

The protein localises to the cytoplasm. It localises to the nucleus. It carries out the reaction L-seryl-[protein] + ATP = O-phospho-L-seryl-[protein] + ADP + H(+). The catalysed reaction is L-threonyl-[protein] + ATP = O-phospho-L-threonyl-[protein] + ADP + H(+). It catalyses the reaction L-tyrosyl-[protein] + ATP = O-phospho-L-tyrosyl-[protein] + ADP + H(+). Functionally, possible non-essential role in spermiogenesis. The polypeptide is Dual specificity tyrosine-phosphorylation-regulated kinase 4 (DYRK4) (Homo sapiens (Human)).